A 153-amino-acid chain; its full sequence is MQRSKIKVEIKRLSHGEDLSLPCYATVQSAGMDLYAALNDSAVLNPLERLLVPTGIVIAIPNGFEGQVRPRSGLAAKHGITVLNSPGTIDSDYRGEVKICLINLSNQPYEIKRGDRIAQILISPVSQVIWDDREEFCAEETGRNAGGFGSSGR.

Substrate contacts are provided by residues 71–73, N84, 88–90, and K98; these read RSG and TID.

This sequence belongs to the dUTPase family. Mg(2+) is required as a cofactor.

The catalysed reaction is dUTP + H2O = dUMP + diphosphate + H(+). Its pathway is pyrimidine metabolism; dUMP biosynthesis; dUMP from dCTP (dUTP route): step 2/2. In terms of biological role, this enzyme is involved in nucleotide metabolism: it produces dUMP, the immediate precursor of thymidine nucleotides and it decreases the intracellular concentration of dUTP so that uracil cannot be incorporated into DNA. This is Deoxyuridine 5'-triphosphate nucleotidohydrolase from Wolbachia sp. subsp. Drosophila simulans (strain wRi).